The primary structure comprises 166 residues: Disulfide bond formation protein B (166 aa).

Residues 1–12 (MKITKLPSYRQT) lie on the Cytoplasmic side of the membrane. The chain crosses the membrane as a helical span at residues 13–29 (ALIIFAGCVGLILAALY). Residues 30–47 (MQEVLGLHPCPLCITQRI) lie on the Periplasmic side of the membrane. Cysteine 39 and cysteine 42 are joined by a disulfide. Residues 48-64 (FIIGVGLISLIAAIHNP) traverse the membrane as a helical segment. At 65–70 (AALGRK) the chain is on the cytoplasmic side. The chain crosses the membrane as a helical span at residues 71 to 88 (VYGCLATLSGVIGAGVSA). The Periplasmic portion of the chain corresponds to 89-145 (RHVWLQNLPEDQVPACGPDLAYMFDAFPLLDALKLLFAGDGNCADVVASFLGLSIPG). Cysteine 104 and cysteine 131 form a disulfide bridge. The chain crosses the membrane as a helical span at residues 146–164 (WTFVAFVGLIAISVWQGLR). Residues 165–166 (KA) lie on the Cytoplasmic side of the membrane.

This sequence belongs to the DsbB family.

It localises to the cell inner membrane. Functionally, required for disulfide bond formation in some periplasmic proteins. Acts by oxidizing the DsbA protein. This chain is Disulfide bond formation protein B, found in Saccharophagus degradans (strain 2-40 / ATCC 43961 / DSM 17024).